A 238-amino-acid chain; its full sequence is 4-hydroxy-tetrahydrodipicolinate reductase (238 aa).

NAD(+) is bound at residue glycine 12–methionine 17. Arginine 40 contacts NADP(+). NAD(+) contacts are provided by residues glycine 93–threonine 95 and alanine 117–phenylalanine 120. Residue histidine 149 is the Proton donor/acceptor of the active site. Histidine 150 is a binding site for (S)-2,3,4,5-tetrahydrodipicolinate. The active-site Proton donor is lysine 153. Glycine 159–threonine 160 serves as a coordination point for (S)-2,3,4,5-tetrahydrodipicolinate.

This sequence belongs to the DapB family.

Its subcellular location is the cytoplasm. The enzyme catalyses (S)-2,3,4,5-tetrahydrodipicolinate + NAD(+) + H2O = (2S,4S)-4-hydroxy-2,3,4,5-tetrahydrodipicolinate + NADH + H(+). It catalyses the reaction (S)-2,3,4,5-tetrahydrodipicolinate + NADP(+) + H2O = (2S,4S)-4-hydroxy-2,3,4,5-tetrahydrodipicolinate + NADPH + H(+). It participates in amino-acid biosynthesis; L-lysine biosynthesis via DAP pathway; (S)-tetrahydrodipicolinate from L-aspartate: step 4/4. Functionally, catalyzes the conversion of 4-hydroxy-tetrahydrodipicolinate (HTPA) to tetrahydrodipicolinate. In Xanthomonas campestris pv. campestris (strain 8004), this protein is 4-hydroxy-tetrahydrodipicolinate reductase.